Reading from the N-terminus, the 318-residue chain is ADP-L-glycero-D-manno-heptose-6-epimerase (318 aa).

NADP(+) contacts are provided by residues Phe-10–Ile-11, Asp-31–Asp-32, Lys-38, Lys-53, and Glu-79–Ser-83. Tyr-144 acts as the Proton acceptor in catalysis. An NADP(+)-binding site is contributed by Lys-148. Asn-173 provides a ligand contact to substrate. Positions 174 and 182 each coordinate NADP(+). Lys-182 (proton acceptor) is an active-site residue. Substrate is bound by residues Ser-184, His-191, Phe-205–Cys-208, Arg-218, and Tyr-282.

Belongs to the NAD(P)-dependent epimerase/dehydratase family. HldD subfamily. Homopentamer. Requires NADP(+) as cofactor.

The enzyme catalyses ADP-D-glycero-beta-D-manno-heptose = ADP-L-glycero-beta-D-manno-heptose. Its pathway is nucleotide-sugar biosynthesis; ADP-L-glycero-beta-D-manno-heptose biosynthesis; ADP-L-glycero-beta-D-manno-heptose from D-glycero-beta-D-manno-heptose 7-phosphate: step 4/4. Catalyzes the interconversion between ADP-D-glycero-beta-D-manno-heptose and ADP-L-glycero-beta-D-manno-heptose via an epimerization at carbon 6 of the heptose. The chain is ADP-L-glycero-D-manno-heptose-6-epimerase from Aeromonas hydrophila subsp. hydrophila (strain ATCC 7966 / DSM 30187 / BCRC 13018 / CCUG 14551 / JCM 1027 / KCTC 2358 / NCIMB 9240 / NCTC 8049).